We begin with the raw amino-acid sequence, 267 residues long: Non-homologous end joining protein Ku (267 aa).

The Ku domain occupies 10-190 (ISFGLVSFPV…TKYTAKELEL (181 aa)).

It belongs to the prokaryotic Ku family. Homodimer. Interacts with LigD.

In terms of biological role, with LigD forms a non-homologous end joining (NHEJ) DNA repair enzyme, which repairs dsDNA breaks with reduced fidelity. Binds linear dsDNA with 5'- and 3'- overhangs but not closed circular dsDNA nor ssDNA. Recruits and stimulates the ligase activity of LigD. This Solibacter usitatus (strain Ellin6076) protein is Non-homologous end joining protein Ku.